The chain runs to 380 residues: Deoxyguanosinetriphosphate triphosphohydrolase-like protein (380 aa).

Residues 79–196 (RLTHTLEVQQ…VDAADALAYT (118 aa)) enclose the HD domain.

The protein belongs to the dGTPase family. Type 2 subfamily.

The chain is Deoxyguanosinetriphosphate triphosphohydrolase-like protein from Deinococcus deserti (strain DSM 17065 / CIP 109153 / LMG 22923 / VCD115).